The primary structure comprises 131 residues: Small ribosomal subunit protein uS8 (131 aa).

The protein belongs to the universal ribosomal protein uS8 family. In terms of assembly, part of the 30S ribosomal subunit. Contacts proteins S5 and S12.

Its function is as follows. One of the primary rRNA binding proteins, it binds directly to 16S rRNA central domain where it helps coordinate assembly of the platform of the 30S subunit. This Campylobacter jejuni (strain RM1221) protein is Small ribosomal subunit protein uS8.